Consider the following 296-residue polypeptide: GTPase Era (296 aa).

Positions 7-174 constitute an Era-type G domain; that stretch reads KAGYISIVGR…TEVIRHYLPE (168 aa). Residues 15–22 form a G1 region; it reads GRPNVGKS. Residue 15–22 coordinates GTP; the sequence is GRPNVGKS. Positions 41 to 45 are G2; that stretch reads QTTRH. The G3 stretch occupies residues 62–65; the sequence is DTPG. GTP contacts are provided by residues 62–66 and 123–126; these read DTPGF and NKID. The segment at 123–126 is G4; that stretch reads NKID. The G5 stretch occupies residues 153–155; it reads VSA. The 77-residue stretch at 205–281 folds into the KH type-2 domain; that stretch reads IGEEVPYSVS…YLEIWVKVKS (77 aa).

Belongs to the TRAFAC class TrmE-Era-EngA-EngB-Septin-like GTPase superfamily. Era GTPase family. Monomer.

Its subcellular location is the cytoplasm. It localises to the cell inner membrane. In terms of biological role, an essential GTPase that binds both GDP and GTP, with rapid nucleotide exchange. Plays a role in 16S rRNA processing and 30S ribosomal subunit biogenesis and possibly also in cell cycle regulation and energy metabolism. This Nitrosomonas eutropha (strain DSM 101675 / C91 / Nm57) protein is GTPase Era.